Reading from the N-terminus, the 102-residue chain is Parathymosin (102 aa).

The disordered stretch occupies residues Met1–Ala102. Ser2 carries the post-translational modification N-acetylserine. A Phosphoserine modification is found at Ser2. An N6-acetyllysine modification is found at Lys4. Phosphoserine is present on residues Ser5 and Ser13. The span at Ser13–Val37 shows a compositional bias: basic and acidic residues. N6-acetyllysine is present on Lys15. The span at Val38–Glu75 shows a compositional bias: acidic residues. A Phosphothreonine modification is found at Thr52. At Lys92 the chain carries N6-acetyllysine.

It belongs to the pro/parathymosin family.

Functionally, parathymosin may mediate immune function by blocking the effect of prothymosin alpha which confers resistance to certain opportunistic infections. The sequence is that of Parathymosin (Ptms) from Rattus norvegicus (Rat).